A 296-amino-acid polypeptide reads, in one-letter code: tRNA-cytidine(32) 2-sulfurtransferase (296 aa).

Positions 72–77 match the PP-loop motif motif; that stretch reads SGGKDS. Positions 147, 150, and 238 each coordinate [4Fe-4S] cluster.

It belongs to the TtcA family. As to quaternary structure, homodimer. Mg(2+) is required as a cofactor. [4Fe-4S] cluster serves as cofactor.

It localises to the cytoplasm. The catalysed reaction is cytidine(32) in tRNA + S-sulfanyl-L-cysteinyl-[cysteine desulfurase] + AH2 + ATP = 2-thiocytidine(32) in tRNA + L-cysteinyl-[cysteine desulfurase] + A + AMP + diphosphate + H(+). The protein operates within tRNA modification. Catalyzes the ATP-dependent 2-thiolation of cytidine in position 32 of tRNA, to form 2-thiocytidine (s(2)C32). The sulfur atoms are provided by the cysteine/cysteine desulfurase (IscS) system. The polypeptide is tRNA-cytidine(32) 2-sulfurtransferase (Sinorhizobium fredii (strain NBRC 101917 / NGR234)).